Consider the following 378-residue polypeptide: Glutamate 5-kinase (378 aa).

K21 contributes to the ATP binding site. Substrate is bound by residues S61, D148, and N160. An ATP-binding site is contributed by 180 to 181 (TD). In terms of domain architecture, PUA spans 286 to 364 (RGTLVLDAGA…RRIEELLGYM (79 aa)).

It belongs to the glutamate 5-kinase family.

It localises to the cytoplasm. It catalyses the reaction L-glutamate + ATP = L-glutamyl 5-phosphate + ADP. It functions in the pathway amino-acid biosynthesis; L-proline biosynthesis; L-glutamate 5-semialdehyde from L-glutamate: step 1/2. Catalyzes the transfer of a phosphate group to glutamate to form L-glutamate 5-phosphate. The chain is Glutamate 5-kinase from Chromohalobacter salexigens (strain ATCC BAA-138 / DSM 3043 / CIP 106854 / NCIMB 13768 / 1H11).